The sequence spans 1049 residues: RIMS-binding protein 2 (1049 aa).

Positions 164–231 (GKVHLCVARY…PSNFVDFIQD (68 aa)) constitute an SH3 1 domain. Fibronectin type-III domains lie at 294-387 (VPYP…GKDV), 390-471 (APSQ…EKDE), and 486-587 (PPQD…VPPA). Disordered regions lie at residues 580-664 (PDLL…VSTT), 694-714 (SAGP…EVKR), and 728-750 (LGQQ…GSDL). Residues 582-598 (LLVPPAPHPRTAPPPKP) are compositionally biased toward pro residues. Positions 603-616 (MDTKDLGPHVKVDE) are enriched in basic and acidic residues. Residues 641–651 (GPGRRSPSPSR) show a composition bias toward low complexity. Phosphoserine occurs at positions 701 and 709. Over residues 735-746 (CHGDEYHTESSR) the composition is skewed to basic and acidic residues. 2 positions are modified to phosphoserine: Ser-832 and Ser-839. Thr-841 bears the Phosphothreonine mark. 2 SH3 domains span residues 848–916 (LPAR…EIHA) and 952–1019 (VPTR…EVPD). The segment at 1024–1049 (HLSDAPPHYSHDPPMRTKAKRVSQPP) is disordered. The segment covering 1040-1049 (TKAKRVSQPP) has biased composition (basic residues).

This sequence belongs to the RIMBP family. Interacts with CACNA1D and CACNA1B, and potentially with other Ca(2+) channel alpha-1 isoforms. Interacts with RIMS1 and RIMS2.

It is found in the cell membrane. Its subcellular location is the synapse. In terms of biological role, plays a role in the synaptic transmission as bifunctional linker that interacts simultaneously with RIMS1, RIMS2, CACNA1D and CACNA1B. The protein is RIMS-binding protein 2 (Rimbp2) of Rattus norvegicus (Rat).